Consider the following 313-residue polypeptide: Ribosomal RNA small subunit methyltransferase H (313 aa).

Residues 35-37, aspartate 55, phenylalanine 79, aspartate 100, and glutamine 107 contribute to the S-adenosyl-L-methionine site; that span reads GGH.

It belongs to the methyltransferase superfamily. RsmH family.

It is found in the cytoplasm. The enzyme catalyses cytidine(1402) in 16S rRNA + S-adenosyl-L-methionine = N(4)-methylcytidine(1402) in 16S rRNA + S-adenosyl-L-homocysteine + H(+). Functionally, specifically methylates the N4 position of cytidine in position 1402 (C1402) of 16S rRNA. This is Ribosomal RNA small subunit methyltransferase H from Burkholderia orbicola (strain AU 1054).